The primary structure comprises 129 residues: Protein Turandot A (129 aa).

Residues 1 to 21 (MNSLTGFMCCALLLISPLCMG) form the signal peptide. Asparagine 49 is a glycosylation site (N-linked (GlcNAc...) asparagine).

It belongs to the Turandot family.

Its subcellular location is the secreted. A humoral factor that plays a role in stress tolerance; gives increased resistance to the lethal effects of bacterial challenge and stress. Regulated by the JAK/STAT pathway and NF-KB-like Relish pathway in the fat body, upd3 in the hemocytes and Mekk1 in response to septic injury and consequent immune response. This Drosophila yakuba (Fruit fly) protein is Protein Turandot A (TotA).